Here is a 176-residue protein sequence, read N- to C-terminus: Cell division control protein 31 (176 aa).

The span at 1 to 12 shows a compositional bias: basic residues; sequence MFANARAKRRSR. The tract at residues 1–21 is disordered; sequence MFANARAKRRSRASSPTPARL. EF-hand domains lie at 34-69, 70-105, 107-142, and 143-176; these read EQRQ…LGFN, AEKS…KIVE, DPLE…LNEN, and IDDQ…MDEA. Residues aspartate 47, aspartate 49, aspartate 51, and glutamate 58 each coordinate Ca(2+). Ca(2+) contacts are provided by aspartate 156, aspartate 158, aspartate 160, glutamate 162, and glutamate 167.

The protein belongs to the centrin family. Component of the spindle pole body (SPB), acting as the connector of microtubule arrays in the cytoplasm and the nucleoplasm, is involved in nuclear positioning before chromosome segregation, SPB separation, spindle formation, chromosome segregation, nuclear migration into the bud, nuclear reorientation after cytokinesis and nuclear fusion during conjugation. The SPB half-bridge, which is tightly associated with the cytoplasmic side of the nuclear envelope and the SPB, is playing a key role as the starting structure for and in the initiation of SPB duplication in G1. Within the complex, interacts with sad1.

Its subcellular location is the nucleus. Required for the proper coordination between exit from mitosis and the initiation of septation. Has a role in bipolar spindle formation during spindle pole body (SPB) duplication. Required for the localization of sad1 to the SPB. This is Cell division control protein 31 (cdc31) from Schizosaccharomyces pombe (strain 972 / ATCC 24843) (Fission yeast).